Consider the following 95-residue polypeptide: Co-chaperonin GroES (95 aa).

It belongs to the GroES chaperonin family. As to quaternary structure, heptamer of 7 subunits arranged in a ring. Interacts with the chaperonin GroEL.

It localises to the cytoplasm. Together with the chaperonin GroEL, plays an essential role in assisting protein folding. The GroEL-GroES system forms a nano-cage that allows encapsulation of the non-native substrate proteins and provides a physical environment optimized to promote and accelerate protein folding. GroES binds to the apical surface of the GroEL ring, thereby capping the opening of the GroEL channel. This chain is Co-chaperonin GroES, found in Oleidesulfovibrio alaskensis (strain ATCC BAA-1058 / DSM 17464 / G20) (Desulfovibrio alaskensis).